Reading from the N-terminus, the 540-residue chain is Zinc metalloproteinase nas-10 (540 aa).

Positions 293–500 (ASIFFEQNLI…VEILNKMYCK (208 aa)) constitute a Peptidase M12A domain. 5 cysteine pairs are disulfide-bonded: Cys339-Cys499, Cys365-Cys385, Cys504-Cys540, Cys511-Cys533, and Cys520-Cys537. His394 provides a ligand contact to Zn(2+). The active site involves Glu395. 2 residues coordinate Zn(2+): His398 and His404. Positions 504 to 540 (CDDKNVYCGAWALQDLCNNPNHNVWMRSNCRKSCNFC) constitute a ShKT domain.

Zn(2+) is required as a cofactor.

In terms of biological role, metalloprotease. This is Zinc metalloproteinase nas-10 from Caenorhabditis elegans.